A 253-amino-acid chain; its full sequence is Putative tyrosine-protein phosphatase OCA1 (253 aa).

Residues 1 to 21 (MHRTSIVEELERHQQDQKADQ) are compositionally biased toward basic and acidic residues. The tract at residues 1–84 (MHRTSIVEEL…PRMKTIVKPP (84 aa)) is disordered. Over residues 27 to 65 (SDASNSALQESSDPRLSTTDNTNTPEINVNDQQQEQQVA) the composition is skewed to polar residues. Residues 93 to 249 (NFGPVERNLY…IIVYPESAPE (157 aa)) enclose the Tyrosine-protein phosphatase domain. Cysteine 186 serves as the catalytic Phosphocysteine intermediate.

The protein belongs to the protein-tyrosine phosphatase family.

It is found in the cytoplasm. The enzyme catalyses O-phospho-L-tyrosyl-[protein] + H2O = L-tyrosyl-[protein] + phosphate. In terms of biological role, putative tyrosine-protein phosphatase required for protection against superoxide stress. This chain is Putative tyrosine-protein phosphatase OCA1 (OCA1), found in Yarrowia lipolytica (strain CLIB 122 / E 150) (Yeast).